We begin with the raw amino-acid sequence, 292 residues long: Probable alpha-L-glutamate ligase (292 aa).

Residues 104 to 287 (HQLLAAKGID…VATRIIEHVE (184 aa)) enclose the ATP-grasp domain. ATP contacts are provided by residues K141, 178 to 179 (EF), D187, and 211 to 213 (RSN). D248, E260, and N262 together coordinate Mg(2+). Mn(2+)-binding residues include D248, E260, and N262.

Belongs to the RimK family. The cofactor is Mg(2+). Requires Mn(2+) as cofactor.

The protein is Probable alpha-L-glutamate ligase of Stenotrophomonas maltophilia (strain K279a).